Here is a 172-residue protein sequence, read N- to C-terminus: MDLKALIRDIPDFPKPGIMFRDITTLLNSPEGLRYTIDSLVEQCESQELVPDHVVGMESRGFLFGMPLAYQMNAGFIPVRKPGKLPAPVHRVEYDLEYGKDSLEIHQDAVAPHHRVLIVDDLIATGGTAKATAELLTKLGCEVLGFAFIIELAALNGRQCLPDLPIISLVEY.

Belongs to the purine/pyrimidine phosphoribosyltransferase family. In terms of assembly, homodimer.

Its subcellular location is the cytoplasm. It catalyses the reaction AMP + diphosphate = 5-phospho-alpha-D-ribose 1-diphosphate + adenine. It functions in the pathway purine metabolism; AMP biosynthesis via salvage pathway; AMP from adenine: step 1/1. Its function is as follows. Catalyzes a salvage reaction resulting in the formation of AMP, that is energically less costly than de novo synthesis. The polypeptide is Adenine phosphoribosyltransferase (Synechocystis sp. (strain ATCC 27184 / PCC 6803 / Kazusa)).